Here is a 149-residue protein sequence, read N- to C-terminus: D-aminoacyl-tRNA deacylase (149 aa).

The short motif at 137–138 is the Gly-cisPro motif, important for rejection of L-amino acids element; that stretch reads GP.

It belongs to the DTD family. Homodimer.

The protein localises to the cytoplasm. It carries out the reaction glycyl-tRNA(Ala) + H2O = tRNA(Ala) + glycine + H(+). It catalyses the reaction a D-aminoacyl-tRNA + H2O = a tRNA + a D-alpha-amino acid + H(+). In terms of biological role, an aminoacyl-tRNA editing enzyme that deacylates mischarged D-aminoacyl-tRNAs. Also deacylates mischarged glycyl-tRNA(Ala), protecting cells against glycine mischarging by AlaRS. Acts via tRNA-based rather than protein-based catalysis; rejects L-amino acids rather than detecting D-amino acids in the active site. By recycling D-aminoacyl-tRNA to D-amino acids and free tRNA molecules, this enzyme counteracts the toxicity associated with the formation of D-aminoacyl-tRNA entities in vivo and helps enforce protein L-homochirality. This Clostridium botulinum (strain 657 / Type Ba4) protein is D-aminoacyl-tRNA deacylase.